We begin with the raw amino-acid sequence, 770 residues long: Mitochondrial 15S rRNA processing factor CCM1 (770 aa).

Residues 1 to 90 (MIRLILWNNV…RSFTKVIAQH (90 aa)) constitute a mitochondrion transit peptide. Disordered stretches follow at residues 28–67 (NKRKRRIPPSKPRSSNRKDGDIEPYRMTDQNQTPNTGSIA) and 90–114 (HLKPEQENDSLTSAEKPDTSQLPPI). Over residues 43 to 53 (NRKDGDIEPYR) the composition is skewed to basic and acidic residues. The span at 55–65 (TDQNQTPNTGS) shows a compositional bias: polar residues. PPR repeat units follow at residues 276–310 (KIDHYETMILAYVKNNHMEKIDGILAQMKKKNIEI), 311–346 (SKMIYTSIVRGYIFYQKDHQRALDTFDSMKFLSQKT), 349–383 (DEKVYTDVIVSCVMHREIERALDLYYELKDKGMNV), 384–419 (NQNLLSTLAKGCSRSKQFKTQAWNFLFQVYDHGWVP), and 420–454 (NLQTYEHMLYIAARDGDVELTRVLFYKMLQTNSVT). Residues 588–598 (RQDEPTEKATT) are compositionally biased toward basic and acidic residues. The disordered stretch occupies residues 588 to 610 (RQDEPTEKATTTEEQITSSEPDT). The segment covering 599 to 610 (TEEQITSSEPDT) has biased composition (polar residues). A PPR 6 repeat occupies 636 to 666 (DSYLYNLAIKAAGKFKDYSFAQQILHERGQF).

This sequence belongs to the CCM1 family. Binds to mitochondrial small subunit 15S rRNA.

The protein localises to the mitochondrion. Its function is as follows. Regulates mitochondrial small subunit maturation by controlling 15S rRNA 5'-end processing. Localizes to the 5' precursor of the 15S rRNA in a position that is subsequently occupied by mS47 in the mature yeast mtSSU. Uses structure and sequence-specific RNA recognition, binding to a single-stranded region of the precursor and specifically recognizing bases -6 to -1. The exchange of Ccm1 for mS47 is coupled to the irreversible removal of precursor rRNA that is accompanied by conformational changes of the mitoribosomal proteins uS5m and mS26. These conformational changes signal completion of 5'-end rRNA processing through protection of the mature 5'-end of the 15S rRNA and stabilization of mS47. The removal of the 5' precursor together with the dissociation of Ccm1 may be catalyzed by the 5'-3' exoribonuclease Pet127. Involved in the specific removal of group I introns in mitochondrial encoded transcripts. The polypeptide is Mitochondrial 15S rRNA processing factor CCM1 (CCM1) (Candida albicans (strain WO-1) (Yeast)).